We begin with the raw amino-acid sequence, 303 residues long: Lipoyl synthase (303 aa).

The [4Fe-4S] cluster site is built by cysteine 35, cysteine 40, cysteine 46, cysteine 61, cysteine 65, cysteine 68, and serine 273. A Radical SAM core domain is found at 47-262; that stretch reads FRERQATFLI…KELAEKMGFR (216 aa).

The protein belongs to the radical SAM superfamily. Lipoyl synthase family. It depends on [4Fe-4S] cluster as a cofactor.

It is found in the cytoplasm. The catalysed reaction is [[Fe-S] cluster scaffold protein carrying a second [4Fe-4S](2+) cluster] + N(6)-octanoyl-L-lysyl-[protein] + 2 oxidized [2Fe-2S]-[ferredoxin] + 2 S-adenosyl-L-methionine + 4 H(+) = [[Fe-S] cluster scaffold protein] + N(6)-[(R)-dihydrolipoyl]-L-lysyl-[protein] + 4 Fe(3+) + 2 hydrogen sulfide + 2 5'-deoxyadenosine + 2 L-methionine + 2 reduced [2Fe-2S]-[ferredoxin]. It functions in the pathway protein modification; protein lipoylation via endogenous pathway; protein N(6)-(lipoyl)lysine from octanoyl-[acyl-carrier-protein]: step 2/2. Functionally, catalyzes the radical-mediated insertion of two sulfur atoms into the C-6 and C-8 positions of the octanoyl moiety bound to the lipoyl domains of lipoate-dependent enzymes, thereby converting the octanoylated domains into lipoylated derivatives. The polypeptide is Lipoyl synthase (Geobacter sulfurreducens (strain ATCC 51573 / DSM 12127 / PCA)).